The chain runs to 478 residues: Aspartyl/glutamyl-tRNA(Asn/Gln) amidotransferase subunit B 2 (478 aa).

The protein belongs to the GatB/GatE family. GatB subfamily. As to quaternary structure, heterotrimer of A, B and C subunits.

It carries out the reaction L-glutamyl-tRNA(Gln) + L-glutamine + ATP + H2O = L-glutaminyl-tRNA(Gln) + L-glutamate + ADP + phosphate + H(+). The enzyme catalyses L-aspartyl-tRNA(Asn) + L-glutamine + ATP + H2O = L-asparaginyl-tRNA(Asn) + L-glutamate + ADP + phosphate + 2 H(+). In terms of biological role, allows the formation of correctly charged Asn-tRNA(Asn) or Gln-tRNA(Gln) through the transamidation of misacylated Asp-tRNA(Asn) or Glu-tRNA(Gln) in organisms which lack either or both of asparaginyl-tRNA or glutaminyl-tRNA synthetases. The reaction takes place in the presence of glutamine and ATP through an activated phospho-Asp-tRNA(Asn) or phospho-Glu-tRNA(Gln). The chain is Aspartyl/glutamyl-tRNA(Asn/Gln) amidotransferase subunit B 2 (gatB2) from Clostridium acetobutylicum (strain ATCC 824 / DSM 792 / JCM 1419 / IAM 19013 / LMG 5710 / NBRC 13948 / NRRL B-527 / VKM B-1787 / 2291 / W).